The following is a 291-amino-acid chain: Citrate lyase subunit beta (291 aa).

Residues Arg66 and Glu129 each coordinate substrate. Mg(2+) is bound by residues Glu129 and Asp156.

Belongs to the HpcH/HpaI aldolase family. Citrate lyase beta subunit subfamily. Oligomer with a subunit composition of (alpha,beta,gamma)6. Mg(2+) is required as a cofactor.

The protein resides in the cytoplasm. It carries out the reaction citrate = oxaloacetate + acetate. It catalyses the reaction (3S)-citryl-CoA = oxaloacetate + acetyl-CoA. In terms of biological role, represents a citryl-ACP lyase. The chain is Citrate lyase subunit beta (citE) from Haemophilus influenzae (strain ATCC 51907 / DSM 11121 / KW20 / Rd).